A 705-amino-acid chain; its full sequence is Tryptophan synthase (705 aa).

The tract at residues 1–293 (MEAIKKVFEQ…QLTPNAETAK (293 aa)) is tryptophan synthase alpha chain. Catalysis depends on proton acceptor residues E49 and D60. Residues 266-287 (KGEPSRVRSPGAAQRTPSQLTP) form a disordered region. Residues 294–705 (GVENILPARF…HVSSNAIPSK (412 aa)) are tryptophan synthase beta chain. K381 is subject to N6-(pyridoxal phosphate)lysine.

In the N-terminal section; belongs to the TrpA family. It in the C-terminal section; belongs to the TrpB family. Pyridoxal 5'-phosphate is required as a cofactor.

The catalysed reaction is (1S,2R)-1-C-(indol-3-yl)glycerol 3-phosphate + L-serine = D-glyceraldehyde 3-phosphate + L-tryptophan + H2O. Its pathway is amino-acid biosynthesis; L-tryptophan biosynthesis; L-tryptophan from chorismate: step 5/5. This Coprinopsis cinerea (Inky cap fungus) protein is Tryptophan synthase (TRP-1).